The following is a 286-amino-acid chain: Small ribosomal subunit protein uS2 (286 aa).

A disordered region spans residues 213–286; the sequence is EEQAQNNKWA…GAQEGGEWGS (74 aa). The span at 227–241 shows a compositional bias: low complexity; sequence SPALSAAVPSSAAPV. Over residues 244–270 the composition is skewed to polar residues; that stretch reads WSSSPSKETTEWGASNTAAAAKSSWSN. Positions 274–286 are enriched in gly residues; the sequence is GEWGAQEGGEWGS.

The protein belongs to the universal ribosomal protein uS2 family. Component of the small ribosomal subunit. Mature ribosomes consist of a small (40S) and a large (60S) subunit. The 40S subunit contains about 33 different proteins and 1 molecule of RNA (18S). The 60S subunit contains about 49 different proteins and 3 molecules of RNA (28S, 5.8S and 5S). Interacts with ribosomal protein S21.

It localises to the cytoplasm. In terms of biological role, required for the assembly and/or stability of the 40S ribosomal subunit. Required for the processing of the 20S rRNA-precursor to mature 18S rRNA in a late step of the maturation of 40S ribosomal subunits. The polypeptide is Small ribosomal subunit protein uS2 (Trichoplax adhaerens (Trichoplax reptans)).